The chain runs to 136 residues: Small ribosomal subunit protein bS6 (136 aa).

A compositionally biased stretch (basic and acidic residues) spans 117–130 (EERSRSSRRQREDV). Residues 117–136 (EERSRSSRRQREDVIEGVEL) form a disordered region.

Belongs to the bacterial ribosomal protein bS6 family.

In terms of biological role, binds together with bS18 to 16S ribosomal RNA. This Bartonella quintana (strain Toulouse) (Rochalimaea quintana) protein is Small ribosomal subunit protein bS6.